A 232-amino-acid polypeptide reads, in one-letter code: Large ribosomal subunit protein uL1 (232 aa).

Belongs to the universal ribosomal protein uL1 family. Part of the 50S ribosomal subunit.

Binds directly to 23S rRNA. The L1 stalk is quite mobile in the ribosome, and is involved in E site tRNA release. Its function is as follows. Protein L1 is also a translational repressor protein, it controls the translation of the L11 operon by binding to its mRNA. The sequence is that of Large ribosomal subunit protein uL1 from Xanthomonas axonopodis pv. citri (strain 306).